Here is a 229-residue protein sequence, read N- to C-terminus: Non-structural protein P8 (229 aa).

2 consecutive transmembrane segments (helical) span residues 119 to 139 and 162 to 182; these read IIHM…VCTL and SLNP…MVCA.

The protein belongs to the orbivirus NS3 family. In terms of assembly, forms homooligomers via coiled-coil motif. Interacts with host OPTN; this interaction inhibits innate immune response.

The protein resides in the host cell membrane. It localises to the host Golgi apparatus. Functionally, plays a role in the inhibition of host innate immune response. Interacts with host OPTN and thus inhibits the recruitment of TBK1 to the host Golgi apparatus. In turn, downstream partner IRF3 cannot be activated and IFN-beta production is impaired. In terms of biological role, facilitates viral particle release either by increasing plasma membrane permeability through a viroporin-like activity or by viral budding. In Antilocapra americana (Pronghorn), this protein is Non-structural protein P8 (Segment-10).